Consider the following 196-residue polypeptide: Molybdenum cofactor guanylyltransferase (196 aa).

GTP-binding positions include 10–12 (LAG), Lys23, Asn51, Asp69, and Asp99. Asp99 provides a ligand contact to Mg(2+).

This sequence belongs to the MobA family. Monomer. Mg(2+) is required as a cofactor.

The protein resides in the cytoplasm. The enzyme catalyses Mo-molybdopterin + GTP + H(+) = Mo-molybdopterin guanine dinucleotide + diphosphate. Its function is as follows. Transfers a GMP moiety from GTP to Mo-molybdopterin (Mo-MPT) cofactor (Moco or molybdenum cofactor) to form Mo-molybdopterin guanine dinucleotide (Mo-MGD) cofactor. In Shewanella baltica (strain OS185), this protein is Molybdenum cofactor guanylyltransferase.